The chain runs to 504 residues: ATP synthase subunit alpha (504 aa).

169-176 (GDRKTGKT) lines the ATP pocket.

The protein belongs to the ATPase alpha/beta chains family. As to quaternary structure, F-type ATPases have 2 components, CF(1) - the catalytic core - and CF(0) - the membrane proton channel. CF(1) has five subunits: alpha(3), beta(3), gamma(1), delta(1), epsilon(1). CF(0) has three main subunits: a(1), b(2) and c(9-12). The alpha and beta chains form an alternating ring which encloses part of the gamma chain. CF(1) is attached to CF(0) by a central stalk formed by the gamma and epsilon chains, while a peripheral stalk is formed by the delta and b chains.

The protein localises to the cell membrane. It carries out the reaction ATP + H2O + 4 H(+)(in) = ADP + phosphate + 5 H(+)(out). In terms of biological role, produces ATP from ADP in the presence of a proton gradient across the membrane. The alpha chain is a regulatory subunit. This is ATP synthase subunit alpha from Leuconostoc citreum (strain KM20).